The primary structure comprises 92 residues: Small ribosomal subunit protein uS19 (92 aa).

This sequence belongs to the universal ribosomal protein uS19 family.

Functionally, protein S19 forms a complex with S13 that binds strongly to the 16S ribosomal RNA. In Rhizobium rhizogenes (strain K84 / ATCC BAA-868) (Agrobacterium radiobacter), this protein is Small ribosomal subunit protein uS19.